A 142-amino-acid polypeptide reads, in one-letter code: Hemoglobin subunit theta-1 (142 aa).

The Globin domain maps to 2 to 142; it reads ALSAEDRALV…VISALVSEYR (141 aa). Heme b-binding residues include H59 and H88.

The protein belongs to the globin family.

The chain is Hemoglobin subunit theta-1 (HBQ1) from Homo sapiens (Human).